We begin with the raw amino-acid sequence, 65 residues long: Beta-defensin 106A (65 aa).

The N-terminal stretch at 1–20 (MRTFLFLFAVLFFLTPAKNE) is a signal peptide. Disulfide bonds link Cys26/Cys53, Cys33/Cys47, and Cys37/Cys54.

This sequence belongs to the beta-defensin family. As to quaternary structure, monomer. Interacts with CCR2 (via extracellular N-terminal region); this interaction may preferentially require specific tyrosine sulfation on CCR2.

It localises to the secreted. Its subcellular location is the membrane. Has antibacterial activity. Acts as a ligand for C-C chemokine receptor CCR2. The sequence is that of Beta-defensin 106A (DEFB106A) from Pongo pygmaeus (Bornean orangutan).